We begin with the raw amino-acid sequence, 338 residues long: Heat-inducible transcription repressor HrcA (338 aa).

It belongs to the HrcA family.

In terms of biological role, negative regulator of class I heat shock genes (grpE-dnaK-dnaJ and groELS operons). Prevents heat-shock induction of these operons. The polypeptide is Heat-inducible transcription repressor HrcA (Bacillus cereus (strain AH187)).